We begin with the raw amino-acid sequence, 376 residues long: Glutamate 5-kinase (376 aa).

K17 serves as a coordination point for ATP. Substrate is bound by residues S57, D144, and N156. 176–177 (TD) lines the ATP pocket. A PUA domain is found at 283–361 (KGQLVLDEGA…SEINQLLGYS (79 aa)).

This sequence belongs to the glutamate 5-kinase family.

The protein localises to the cytoplasm. The catalysed reaction is L-glutamate + ATP = L-glutamyl 5-phosphate + ADP. The protein operates within amino-acid biosynthesis; L-proline biosynthesis; L-glutamate 5-semialdehyde from L-glutamate: step 1/2. Catalyzes the transfer of a phosphate group to glutamate to form L-glutamate 5-phosphate. This chain is Glutamate 5-kinase, found in Hydrogenovibrio crunogenus (strain DSM 25203 / XCL-2) (Thiomicrospira crunogena).